The following is a 727-amino-acid chain: 5'-AMP-activated serine/threonine-protein kinase catalytic subunit alpha (727 aa).

A Protein kinase domain is found at 31-284 (YRLDKTLGIG…IHEIRNHPWF (254 aa)). Residues 37-45 (LGIGSFGKV) and K60 each bind ATP. Catalysis depends on D154, which acts as the Proton acceptor. T188 is modified (phosphothreonine). The segment at 382 to 590 (FTTTTGFNPS…GSNNNSYEGG (209 aa)) is disordered. Low complexity-rich tracts occupy residues 391-483 (SNSN…SSIS) and 494-586 (NLNN…NNNS). One can recognise a KA1 domain in the interval 679-727 (RMVNGKPIKLVLQLFRVAENRYLLDIKKIEGEIFIFFDICSLMLEELNL).

This sequence belongs to the protein kinase superfamily. CAMK Ser/Thr protein kinase family. SNF1 subfamily. As to quaternary structure, heterotrimer of an alpha catalytic subunit, a beta and a gamma non-catalytic subunits.

The enzyme catalyses L-seryl-[protein] + ATP = O-phospho-L-seryl-[protein] + ADP + H(+). It carries out the reaction L-threonyl-[protein] + ATP = O-phospho-L-threonyl-[protein] + ADP + H(+). Its function is as follows. Activated enzyme phosphorylates target proteins and initiates downstream signaling pathways that shift metabolism from anabolic to catabolic pathways. Acts as a highly sensitive cellular energy sensor. This Dictyostelium discoideum (Social amoeba) protein is 5'-AMP-activated serine/threonine-protein kinase catalytic subunit alpha (snfA).